Consider the following 120-residue polypeptide: Large ribosomal subunit protein bL19 (120 aa).

It belongs to the bacterial ribosomal protein bL19 family.

Functionally, this protein is located at the 30S-50S ribosomal subunit interface and may play a role in the structure and function of the aminoacyl-tRNA binding site. The polypeptide is Large ribosomal subunit protein bL19 (Geobacillus kaustophilus (strain HTA426)).